The following is a 224-amino-acid chain: MTKIILTDIEGTTSSLSFVKDVLFPYAREHLPEFVRGHRDDTEVKRLLADARAYAGGDLDEEALIERMIGWIDNDQKITPLKALQGLIWEDGYARGDFQGHVYEDAVAHLRQWHQQGLRLAVYSSGSVHAQKLLFGHTAFGDLNPLFEAYFDTRIGGKRDTASYKAIAKELGVEPREVLFLSDLRAELDAAAEAGMKTTALDRAGNGEDFGPHPVARDFAGVGV.

The protein belongs to the HAD-like hydrolase superfamily. MasA/MtnC family. In terms of assembly, monomer. It depends on Mg(2+) as a cofactor.

The catalysed reaction is 5-methylsulfanyl-2,3-dioxopentyl phosphate + H2O = 1,2-dihydroxy-5-(methylsulfanyl)pent-1-en-3-one + phosphate. It participates in amino-acid biosynthesis; L-methionine biosynthesis via salvage pathway; L-methionine from S-methyl-5-thio-alpha-D-ribose 1-phosphate: step 3/6. Its pathway is amino-acid biosynthesis; L-methionine biosynthesis via salvage pathway; L-methionine from S-methyl-5-thio-alpha-D-ribose 1-phosphate: step 4/6. In terms of biological role, bifunctional enzyme that catalyzes the enolization of 2,3-diketo-5-methylthiopentyl-1-phosphate (DK-MTP-1-P) into the intermediate 2-hydroxy-3-keto-5-methylthiopentenyl-1-phosphate (HK-MTPenyl-1-P), which is then dephosphorylated to form the acireductone 1,2-dihydroxy-3-keto-5-methylthiopentene (DHK-MTPene). The polypeptide is Enolase-phosphatase E1 (Thioalkalivibrio sulfidiphilus (strain HL-EbGR7)).